The sequence spans 179 residues: Ribosome-recycling factor (179 aa).

It belongs to the RRF family.

It localises to the cytoplasm. Its function is as follows. Responsible for the release of ribosomes from messenger RNA at the termination of protein biosynthesis. May increase the efficiency of translation by recycling ribosomes from one round of translation to another. The protein is Ribosome-recycling factor of Chlamydia trachomatis serovar A (strain ATCC VR-571B / DSM 19440 / HAR-13).